We begin with the raw amino-acid sequence, 235 residues long: Large ribosomal subunit protein uL1 (235 aa).

The protein belongs to the universal ribosomal protein uL1 family. As to quaternary structure, part of the 50S ribosomal subunit.

Functionally, binds directly to 23S rRNA. The L1 stalk is quite mobile in the ribosome, and is involved in E site tRNA release. Its function is as follows. Protein L1 is also a translational repressor protein, it controls the translation of the L11 operon by binding to its mRNA. The protein is Large ribosomal subunit protein uL1 of Halothermothrix orenii (strain H 168 / OCM 544 / DSM 9562).